The sequence spans 494 residues: MSSEDSLKSLSLDYLNLLINGQAFSDVAFSVEGRLVHAHRCVLAARSLFFRKLFCGLDPNHQPPPPPPPPLNWPTAGGGGGGSGGGGRGGAGGGGGAPATPELVIPVSSIRYEVLVLVLQFLYSGQASVAAPKSGPLPGCGARGCWHTRCGAAVDLALDTLAAARSFGVEQLALLVQKQLESMVKEASVDDVMKVLMASRKFEMQELWATCSHLVARSGLSADLLAKHLPIDVVAKIEEIRAKSPLAAAAAPRSPFLTHHYLPMNPASSAADRDNKIRRMRRALDAADIELVKLMVMGEGLDLDDALAVHYAVQHCNRDVVKALLELGAADVNSRAGPTGKTALHLAAEMVSPDMVSVLLDHHADPNSRTLDGVTPLDVLRSLTSEFLFKGAVPGLTHIEPNKLRLCLELVQSAVMVTTRDDGAPVTGGEAGGSDGGNFPRSDADDSLVSLTMNSTLMYQGQEMAAAVAAGEGRKSNNGRGSPPPAMYFPNGFA.

The BTB domain maps to 25–131 (SDVAFSVEGR…LYSGQASVAA (107 aa)). The tract at residues 60–95 (NHQPPPPPPPPLNWPTAGGGGGGSGGGGRGGAGGGG) is disordered. A compositionally biased stretch (pro residues) spans 61 to 72 (HQPPPPPPPPLN). Residues 76-95 (AGGGGGGSGGGGRGGAGGGG) show a composition bias toward gly residues. The C2HC NPR-type zinc-finger motif lies at 137 to 151 (LPGCGARGCWHTRCG). Positions 140, 145, 147, and 150 each coordinate Zn(2+). 4 ANK repeats span residues 275-303 (NKIR…GLDL), 304-334 (DDAL…DVNS), 339-368 (TGKT…DPNS), and 372-406 (DGVT…KLRL). 2 disordered regions span residues 421–443 (DDGA…PRSD) and 471–494 (GEGR…NGFA).

It belongs to the plant 'ANKYRIN-BTB/POZ' family. 'NOOT-BOP-COCH-like' (NBCL) subfamily. Homodimer. Interacts with TGAL5, TGAL7, TGAL8 and TGAL9.

The protein resides in the nucleus. It is found in the cytoplasm. Its pathway is protein modification; protein ubiquitination. Functionally, may act as a substrate-specific adapter of an E3 ubiquitin-protein ligase complex (CUL3-RBX1-BTB) which mediates the ubiquitination and subsequent proteasomal degradation of target proteins. Transcriptional co-regulator involved in the promotion of leaf and floral meristem fate and determinacy. Required for the abscission of senescent organs, probably by regulating the cell wall disorganization in abscission zones (AZs, e.g. pulvini at the base of leaves). This chain is BTB/POZ domain and ankyrin repeat-containing protein NH5.2, found in Oryza sativa subsp. japonica (Rice).